We begin with the raw amino-acid sequence, 306 residues long: Phenylcoumaran benzylic ether reductase POP1 (306 aa).

Residues 9–15 (GGTGYIG), arginine 34, and lysine 43 contribute to the NADP(+) site. Catalysis depends on lysine 131, which acts as the Proton acceptor. An NADP(+)-binding site is contributed by arginine 135.

The protein belongs to the NmrA-type oxidoreductase family. Isoflavone reductase subfamily.

It carries out the reaction (-)-dehydrodiconiferyl alcohol + NADPH + H(+) = (S)-isodihydrodehydrodiconiferyl alcohol + NADP(+). It catalyses the reaction (+)-dehydrodiconiferyl alcohol + NADPH + H(+) = (R)-isodihydrodehydrodiconiferyl alcohol + NADP(+). The catalysed reaction is (2R,3S)-dihydrodehydrodiconiferyl alcohol + NADPH + H(+) = (S)-tetrahydrodehydrodiconiferyl alcohol + NADP(+). The enzyme catalyses (2S,3R)-dihydrodehydrodiconiferyl alcohol + NADPH + H(+) = (R)-tetrahydrodehydrodiconiferyl alcohol + NADP(+). Oxidoreductase involved in lignan biosynthesis. Catalyzes the NADPH-dependent reduction of phenylcoumaran benzylic ethers. Converts dehydrodiconiferyl alcohol (DDC) to isodihydrodehydrodiconiferyl alcohol (IDDDC), and dihydrodehydrodiconiferyl alcohol (DDDC) to tetrahydrodehydrodiconiferyl alcohol (TDDC). The chain is Phenylcoumaran benzylic ether reductase POP1 from Populus trichocarpa (Western balsam poplar).